The chain runs to 348 residues: Putative agmatine deiminase (348 aa).

Cys335 (amidino-cysteine intermediate) is an active-site residue.

It belongs to the agmatine deiminase family.

The enzyme catalyses agmatine + H2O = N-carbamoylputrescine + NH4(+). The chain is Putative agmatine deiminase from Legionella pneumophila subsp. pneumophila (strain Philadelphia 1 / ATCC 33152 / DSM 7513).